The chain runs to 450 residues: UDP-N-acetylmuramoylalanine--D-glutamate ligase (450 aa).

119 to 125 contacts ATP; it reads GSNGKTT.

Belongs to the MurCDEF family.

The protein resides in the cytoplasm. The enzyme catalyses UDP-N-acetyl-alpha-D-muramoyl-L-alanine + D-glutamate + ATP = UDP-N-acetyl-alpha-D-muramoyl-L-alanyl-D-glutamate + ADP + phosphate + H(+). Its pathway is cell wall biogenesis; peptidoglycan biosynthesis. Cell wall formation. Catalyzes the addition of glutamate to the nucleotide precursor UDP-N-acetylmuramoyl-L-alanine (UMA). This Bacillus anthracis (strain A0248) protein is UDP-N-acetylmuramoylalanine--D-glutamate ligase.